Here is a 209-residue protein sequence, read N- to C-terminus: Large ribosomal subunit protein uL3 (209 aa).

It belongs to the universal ribosomal protein uL3 family. As to quaternary structure, part of the 50S ribosomal subunit. Forms a cluster with proteins L14 and L19.

One of the primary rRNA binding proteins, it binds directly near the 3'-end of the 23S rRNA, where it nucleates assembly of the 50S subunit. In Desulfotalea psychrophila (strain LSv54 / DSM 12343), this protein is Large ribosomal subunit protein uL3.